Consider the following 441-residue polypeptide: Phosphoribosylamine--glycine ligase (441 aa).

An ATP-grasp domain is found at 112-319 (RNFMKKYGIE…FTEIMSAVVK (208 aa)). 139–196 (IEKLGDVAVKPSGLTGGKGVKVMGDQLPDLKAAKDYTSELLEKGPVVIEERFIGEEFT) provides a ligand contact to ATP. 3 residues coordinate Mg(2+): Gln-277, Glu-289, and Asn-291. Positions 277, 289, and 291 each coordinate Mn(2+).

This sequence belongs to the GARS family. Mg(2+) serves as cofactor. Requires Mn(2+) as cofactor.

It catalyses the reaction 5-phospho-beta-D-ribosylamine + glycine + ATP = N(1)-(5-phospho-beta-D-ribosyl)glycinamide + ADP + phosphate + H(+). It functions in the pathway purine metabolism; IMP biosynthesis via de novo pathway; N(1)-(5-phospho-D-ribosyl)glycinamide from 5-phospho-alpha-D-ribose 1-diphosphate: step 2/2. The chain is Phosphoribosylamine--glycine ligase from Methanosarcina acetivorans (strain ATCC 35395 / DSM 2834 / JCM 12185 / C2A).